A 146-amino-acid polypeptide reads, in one-letter code: 3-hydroxyacyl-[acyl-carrier-protein] dehydratase FabZ (146 aa).

H49 is a catalytic residue.

Belongs to the thioester dehydratase family. FabZ subfamily.

The protein resides in the cytoplasm. The enzyme catalyses a (3R)-hydroxyacyl-[ACP] = a (2E)-enoyl-[ACP] + H2O. Involved in unsaturated fatty acids biosynthesis. Catalyzes the dehydration of short chain beta-hydroxyacyl-ACPs and long chain saturated and unsaturated beta-hydroxyacyl-ACPs. The polypeptide is 3-hydroxyacyl-[acyl-carrier-protein] dehydratase FabZ (Pseudomonas fluorescens (strain Pf0-1)).